Consider the following 96-residue polypeptide: Evasin P1074 (96 aa).

A signal peptide spans Met-1–Ala-28. Disulfide bonds link Cys-48–Cys-67, Cys-52–Cys-69, and Cys-63–Cys-80. An N-linked (GlcNAc...) asparagine glycan is attached at Asn-74.

The protein localises to the secreted. Its function is as follows. Salivary chemokine-binding protein which binds to host chemokines CXCL1 and CXCL8. This is Evasin P1074 from Ixodes ricinus (Common tick).